We begin with the raw amino-acid sequence, 364 residues long: Succinyl-diaminopimelate desuccinylase (364 aa).

His66 lines the Zn(2+) pocket. Asp68 is a catalytic residue. Zn(2+) is bound at residue Asp97. Glu127 (proton acceptor) is an active-site residue. Residues Glu128, Glu156, and His341 each coordinate Zn(2+).

The protein belongs to the peptidase M20A family. DapE subfamily. As to quaternary structure, homodimer. The cofactor is Zn(2+). It depends on Co(2+) as a cofactor.

It carries out the reaction N-succinyl-(2S,6S)-2,6-diaminopimelate + H2O = (2S,6S)-2,6-diaminopimelate + succinate. It functions in the pathway amino-acid biosynthesis; L-lysine biosynthesis via DAP pathway; LL-2,6-diaminopimelate from (S)-tetrahydrodipicolinate (succinylase route): step 3/3. Functionally, catalyzes the hydrolysis of N-succinyl-L,L-diaminopimelic acid (SDAP), forming succinate and LL-2,6-diaminopimelate (DAP), an intermediate involved in the bacterial biosynthesis of lysine and meso-diaminopimelic acid, an essential component of bacterial cell walls. The sequence is that of Succinyl-diaminopimelate desuccinylase from Wolinella succinogenes (strain ATCC 29543 / DSM 1740 / CCUG 13145 / JCM 31913 / LMG 7466 / NCTC 11488 / FDC 602W) (Vibrio succinogenes).